Here is a 569-residue protein sequence, read N- to C-terminus: 3-(3-hydroxy-phenyl)propionate/3-hydroxycinnamic acid hydroxylase (569 aa).

FAD contacts are provided by residues 12 to 41 and 277 to 287; these read DVVV…VVDE and FRKGRLMLAGD.

The protein belongs to the PheA/TfdB FAD monooxygenase family. FAD is required as a cofactor.

It catalyses the reaction 3-(3-hydroxyphenyl)propanoate + NADH + O2 + H(+) = 3-(2,3-dihydroxyphenyl)propanoate + NAD(+) + H2O. It carries out the reaction (2E)-3-(3-hydroxyphenyl)prop-2-enoate + NADH + O2 + H(+) = (2E)-3-(2,3-dihydroxyphenyl)prop-2-enoate + NAD(+) + H2O. It participates in aromatic compound metabolism; 3-phenylpropanoate degradation. Catalyzes the insertion of one atom of molecular oxygen into position 2 of the phenyl ring of 3-(3-hydroxyphenyl)propionate (3-HPP) and hydroxycinnamic acid (3HCI). The polypeptide is 3-(3-hydroxy-phenyl)propionate/3-hydroxycinnamic acid hydroxylase (Mycolicibacterium vanbaalenii (strain DSM 7251 / JCM 13017 / BCRC 16820 / KCTC 9966 / NRRL B-24157 / PYR-1) (Mycobacterium vanbaalenii)).